A 227-amino-acid chain; its full sequence is Orotidine 5'-phosphate decarboxylase (227 aa).

Substrate-binding positions include D8, K30, 58-67 (DLKVHDIPNT), T117, R177, Q186, G206, and R207. The Proton donor role is filled by K60.

The protein belongs to the OMP decarboxylase family. Type 1 subfamily. In terms of assembly, homodimer.

It catalyses the reaction orotidine 5'-phosphate + H(+) = UMP + CO2. The protein operates within pyrimidine metabolism; UMP biosynthesis via de novo pathway; UMP from orotate: step 2/2. In terms of biological role, catalyzes the decarboxylation of orotidine 5'-monophosphate (OMP) to uridine 5'-monophosphate (UMP). The polypeptide is Orotidine 5'-phosphate decarboxylase (Campylobacter fetus subsp. fetus (strain 82-40)).